A 151-amino-acid chain; its full sequence is MKCPFCSHPDTQVVETREAEDGGFIRRRRQCGGCDKRFTTYERPEVSFPAIVKKDGRRIEYERAKLLGSFKIALRKRPVSTEQIDAAIERIEERLRNLGEREVLSSRLGEMVMRELKLLDKVGYIRYASVYRSFEDVDDFKNVMDEVRNPG.

Residues 3–34 (CPFCSHPDTQVVETREAEDGGFIRRRRQCGGC) fold into a zinc finger. The 91-residue stretch at 49–139 (PAIVKKDGRR…VYRSFEDVDD (91 aa)) folds into the ATP-cone domain.

Belongs to the NrdR family. Requires Zn(2+) as cofactor.

Its function is as follows. Negatively regulates transcription of bacterial ribonucleotide reductase nrd genes and operons by binding to NrdR-boxes. This chain is Transcriptional repressor NrdR, found in Delftia acidovorans (strain DSM 14801 / SPH-1).